Consider the following 456-residue polypeptide: Cysteine--tRNA ligase (456 aa).

A Zn(2+)-binding site is contributed by C29. Residues 31 to 41 (VTVYDYCHVGH) carry the 'HIGH' region motif. Positions 210, 235, and 239 each coordinate Zn(2+). The short motif at 267–271 (KMSKS) is the 'KMSKS' region element. K270 lines the ATP pocket.

The protein belongs to the class-I aminoacyl-tRNA synthetase family. Monomer. The cofactor is Zn(2+).

It localises to the cytoplasm. It catalyses the reaction tRNA(Cys) + L-cysteine + ATP = L-cysteinyl-tRNA(Cys) + AMP + diphosphate. This chain is Cysteine--tRNA ligase, found in Hydrogenovibrio crunogenus (strain DSM 25203 / XCL-2) (Thiomicrospira crunogena).